Reading from the N-terminus, the 302-residue chain is RING-H2 finger protein ATL38 (302 aa).

Residues L15–F35 form a helical membrane-spanning segment. The RING-type; atypical zinc-finger motif lies at C96–R138. The segment at G279–V302 is disordered. Positions K286–V302 are enriched in basic and acidic residues.

Belongs to the RING-type zinc finger family. ATL subfamily.

It is found in the membrane. It catalyses the reaction S-ubiquitinyl-[E2 ubiquitin-conjugating enzyme]-L-cysteine + [acceptor protein]-L-lysine = [E2 ubiquitin-conjugating enzyme]-L-cysteine + N(6)-ubiquitinyl-[acceptor protein]-L-lysine.. It participates in protein modification; protein ubiquitination. The polypeptide is RING-H2 finger protein ATL38 (ATL38) (Arabidopsis thaliana (Mouse-ear cress)).